Reading from the N-terminus, the 449-residue chain is Major capsid protein (449 aa).

In terms of domain architecture, BIG2 spans 349–427 (AVTQVIVSPA…TVDIGTADEP (79 aa)).

It belongs to the phi29likevirus major capsid protein family. As to quaternary structure, homohexamer. Homopentamer. The prolate capsid is composed of pentamers and hexamers of the capsid protein.

Its subcellular location is the virion. Assembles to form a prolate capsid shell of about 54 nm in length and 45 nm in width, with a T=3, Q=5 symmetry. This is Major capsid protein (8) from Bacillus subtilis (Bacteriophage B103).